The chain runs to 382 residues: Alkanesulfonate monooxygenase (382 aa).

Belongs to the SsuD family. Homotetramer.

The catalysed reaction is an alkanesulfonate + FMNH2 + O2 = an aldehyde + FMN + sulfite + H2O + 2 H(+). Functionally, catalyzes the desulfonation of aliphatic sulfonates. The polypeptide is Alkanesulfonate monooxygenase (Yersinia pseudotuberculosis serotype O:1b (strain IP 31758)).